The sequence spans 448 residues: MRITFNDVKTSLGITESYDIVNAIRNSQGDSFKSYVPLATADNVAEVGAGILINQTVQNDFITSLVDRIGLVVIRQVSLNNPLKKFKKGQIPLGRTIEEIYTDITKEKQYDAEEAEHKVFEREMPNVKTLFHERNRQGFYHQTIQDDSLKTAFVSWGNFESFVSSIINAIYNSAEVDEYEYMKLLVDNYYSKGLFTTVKIDEPTSSTGALTEFVKKMRATARKLTLPQGSRDWNSMAVRTRSYMEDLHLIIDADLEAELDVDVLAKAFNMNRTDFLGNVTVIDGFASTGLEAVLVDKDWFMVYDNLHKMETVRNPRGLYWNYYYHVWQTLSVSRSANAVAFVSGDVPAVTQVIVSPNIAAVKQGGKQQFTAYVRATDGKDHKVVWSVEGGSTGTAITGDGLLSVSGNEENQLTVKATVDIGTEDKPNLVVGEAVVSIRPNNASGGAQA.

Residues 104–127 (ITKEKQYDAEEAEHKVFEREMPNV) are a coiled coil. Residues 348–425 (AVTQVIVSPN…ATVDIGTEDK (78 aa)) enclose the BIG2 domain.

This sequence belongs to the phi29likevirus major capsid protein family. In terms of assembly, homohexamer. Homopentamer. The prolate capsid is composed of pentamers and hexamers of the capsid protein.

It is found in the virion. Its function is as follows. Assembles to form a prolate capsid shell of about 54 nm in length and 45 nm in width, with a T=3, Q=5 symmetry. In Bacillus subtilis (Bacteriophage PZA), this protein is Major capsid protein (8).